Consider the following 64-residue polypeptide: Large ribosomal subunit protein uL30 (64 aa).

The protein belongs to the universal ribosomal protein uL30 family. As to quaternary structure, part of the 50S ribosomal subunit.

This chain is Large ribosomal subunit protein uL30, found in Methylorubrum populi (strain ATCC BAA-705 / NCIMB 13946 / BJ001) (Methylobacterium populi).